The chain runs to 299 residues: Glutamyl-Q tRNA(Asp) synthetase (299 aa).

Residues 9–13 and glutamate 45 contribute to the L-glutamate site; that span reads RFAPS. Positions 12–22 match the 'HIGH' region motif; sequence PSPTGPLHFGS. Positions 101, 103, and 118 each coordinate Zn(2+). 2 residues coordinate L-glutamate: tyrosine 170 and arginine 188. Positions 226–230 match the 'KMSKS' region motif; that stretch reads KLSKS. Lysine 229 is an ATP binding site.

The protein belongs to the class-I aminoacyl-tRNA synthetase family. GluQ subfamily. Zn(2+) is required as a cofactor.

Its function is as follows. Catalyzes the tRNA-independent activation of glutamate in presence of ATP and the subsequent transfer of glutamate onto a tRNA(Asp). Glutamate is transferred on the 2-amino-5-(4,5-dihydroxy-2-cyclopenten-1-yl) moiety of the queuosine in the wobble position of the QUC anticodon. The chain is Glutamyl-Q tRNA(Asp) synthetase from Xanthomonas axonopodis pv. citri (strain 306).